The chain runs to 117 residues: UPF0102 protein FTN_0424 (117 aa).

It belongs to the UPF0102 family.

In Francisella tularensis subsp. novicida (strain U112), this protein is UPF0102 protein FTN_0424.